Reading from the N-terminus, the 57-residue chain is Small ribosomal subunit protein eS27 (57 aa).

Zn(2+) contacts are provided by C10, C13, C29, and C32. The C4-type zinc finger occupies 10-32 (CPDCENEQSLFEKAASEVSCAVC).

The protein belongs to the eukaryotic ribosomal protein eS27 family. Part of the 30S ribosomal subunit. It depends on Zn(2+) as a cofactor.

This chain is Small ribosomal subunit protein eS27, found in Haloarcula marismortui (strain ATCC 43049 / DSM 3752 / JCM 8966 / VKM B-1809) (Halobacterium marismortui).